We begin with the raw amino-acid sequence, 625 residues long: BTB/POZ domain-containing protein At5g48130 (625 aa).

The region spanning 41 to 105 (ASVHVRVCNK…IYGCPTLIHP (65 aa)) is the BTB domain. Residues 217–469 (DTWIKDLTDL…VQALFIQQLN (253 aa)) form the NPH3 domain. The segment covering 494-507 (VPSSRPLTSQQSPC) has biased composition (polar residues). The disordered stretch occupies residues 494 to 513 (VPSSRPLTSQQSPCTDDETG).

The protein belongs to the NPH3 family.

It participates in protein modification; protein ubiquitination. Its function is as follows. May act as a substrate-specific adapter of an E3 ubiquitin-protein ligase complex (CUL3-RBX1-BTB) which mediates the ubiquitination and subsequent proteasomal degradation of target proteins. The sequence is that of BTB/POZ domain-containing protein At5g48130 from Arabidopsis thaliana (Mouse-ear cress).